The chain runs to 196 residues: Probable GTP-binding protein EngB (196 aa).

The EngB-type G domain maps to 24–196 (ELSEVALSGR…IWNLIEPYIS (173 aa)). GTP contacts are provided by residues 32–39 (GRSNVGKS), 59–63 (GKTQT), 77–80 (DVPG), 144–147 (TKED), and 176–178 (YSS). Residues Ser-39 and Thr-61 each contribute to the Mg(2+) site.

Belongs to the TRAFAC class TrmE-Era-EngA-EngB-Septin-like GTPase superfamily. EngB GTPase family. It depends on Mg(2+) as a cofactor.

Its function is as follows. Necessary for normal cell division and for the maintenance of normal septation. This is Probable GTP-binding protein EngB from Staphylococcus aureus (strain MRSA252).